The sequence spans 206 residues: MLSAQLEAYLAEINLPATAEQKKQLLDFVGMLNKWNKAYNLTSVRDPEIMLVRHIMDSLVVSKHLQGDRFIDVGTGPGLPGIPLAIMNPDKTFVLLDSLGKRIRFQKQVAFELGIHNVSSIESRVEAYQPEQKFDGVLSRAFASIHDMLTWCHHLPAEHGQFYALKGQLSDDEMQHIPTGFAITETIELKVPRLDEQRHLLKIIKE.

Residues glycine 74, leucine 79, 125–126, and arginine 140 contribute to the S-adenosyl-L-methionine site; that span reads VE.

Belongs to the methyltransferase superfamily. RNA methyltransferase RsmG family.

The protein localises to the cytoplasm. It carries out the reaction guanosine(527) in 16S rRNA + S-adenosyl-L-methionine = N(7)-methylguanosine(527) in 16S rRNA + S-adenosyl-L-homocysteine. In terms of biological role, specifically methylates the N7 position of guanine in position 527 of 16S rRNA. This is Ribosomal RNA small subunit methyltransferase G from Shewanella oneidensis (strain ATCC 700550 / JCM 31522 / CIP 106686 / LMG 19005 / NCIMB 14063 / MR-1).